A 571-amino-acid chain; its full sequence is Proline--tRNA ligase (571 aa).

This sequence belongs to the class-II aminoacyl-tRNA synthetase family. ProS type 1 subfamily. As to quaternary structure, homodimer.

It is found in the cytoplasm. The enzyme catalyses tRNA(Pro) + L-proline + ATP = L-prolyl-tRNA(Pro) + AMP + diphosphate. Its function is as follows. Catalyzes the attachment of proline to tRNA(Pro) in a two-step reaction: proline is first activated by ATP to form Pro-AMP and then transferred to the acceptor end of tRNA(Pro). As ProRS can inadvertently accommodate and process non-cognate amino acids such as alanine and cysteine, to avoid such errors it has two additional distinct editing activities against alanine. One activity is designated as 'pretransfer' editing and involves the tRNA(Pro)-independent hydrolysis of activated Ala-AMP. The other activity is designated 'posttransfer' editing and involves deacylation of mischarged Ala-tRNA(Pro). The misacylated Cys-tRNA(Pro) is not edited by ProRS. The protein is Proline--tRNA ligase of Syntrophotalea carbinolica (strain DSM 2380 / NBRC 103641 / GraBd1) (Pelobacter carbinolicus).